The primary structure comprises 994 residues: Regulator of telomere elongation helicase 1 homolog (994 aa).

The Helicase ATP-binding domain maps to 15-300 (PKLSVKFPFE…EETARSEADA (286 aa)). 50–57 (SPTGTGKT) contributes to the ATP binding site. The [4Fe-4S] cluster site is built by Cys142, Cys160, Cys169, and Cys208. The short motif at 251-254 (DEAH) is the DEAH box element. Positions 876–895 (FKIETPGPSTSTLTQKSEPP) are disordered. Over residues 882–892 (GPSTSTLTQKS) the composition is skewed to polar residues.

Belongs to the helicase family. RAD3/XPD subfamily.

It localises to the nucleus. The enzyme catalyses ATP + H2O = ADP + phosphate + H(+). Its function is as follows. A probable ATP-dependent DNA helicase implicated in DNA repair and the maintenance of genomic stability. Acts as an anti-recombinase to counteract toxic recombination and limit crossover during meiosis. Regulates meiotic recombination and crossover homeostasis by physically dissociating strand invasion events and thereby promotes noncrossover repair by meiotic synthesis dependent strand annealing (SDSA) as well as disassembly of D loop recombination intermediates. This Caenorhabditis elegans protein is Regulator of telomere elongation helicase 1 homolog.